The primary structure comprises 299 residues: tRNA uridine(34) hydroxylase (299 aa).

In terms of domain architecture, Rhodanese spans 132 to 226 (ASRPVVMLDT…YFEEVGGAHY (95 aa)). Catalysis depends on Cys186, which acts as the Cysteine persulfide intermediate.

The protein belongs to the TrhO family.

The enzyme catalyses uridine(34) in tRNA + AH2 + O2 = 5-hydroxyuridine(34) in tRNA + A + H2O. Catalyzes oxygen-dependent 5-hydroxyuridine (ho5U) modification at position 34 in tRNAs. This is tRNA uridine(34) hydroxylase from Burkholderia pseudomallei (strain K96243).